A 635-amino-acid chain; its full sequence is Chaperone protein HtpG (635 aa).

Residues 1-343 (MTAEATVETR…SNDLSLNVSR (343 aa)) form an a; substrate-binding region. Residues 344 to 560 (EILQQDPNID…EHDMGAQMRR (217 aa)) are b. The interval 561 to 635 (LLEAAGQAVP…LNKLLLELSN (75 aa)) is c.

Belongs to the heat shock protein 90 family. Homodimer.

It localises to the cytoplasm. Molecular chaperone. Has ATPase activity. The sequence is that of Chaperone protein HtpG from Saccharophagus degradans (strain 2-40 / ATCC 43961 / DSM 17024).